The chain runs to 276 residues: NAD kinase (276 aa).

Aspartate 61 functions as the Proton acceptor in the catalytic mechanism. NAD(+) contacts are provided by residues 61-62 (DG), 134-135 (ND), arginine 145, lysine 162, aspartate 164, valine 172, 175-180 (TAYSFS), and glutamine 234.

This sequence belongs to the NAD kinase family. The cofactor is a divalent metal cation.

It is found in the cytoplasm. It carries out the reaction NAD(+) + ATP = ADP + NADP(+) + H(+). Involved in the regulation of the intracellular balance of NAD and NADP, and is a key enzyme in the biosynthesis of NADP. Catalyzes specifically the phosphorylation on 2'-hydroxyl of the adenosine moiety of NAD to yield NADP. The chain is NAD kinase from Clostridium perfringens (strain ATCC 13124 / DSM 756 / JCM 1290 / NCIMB 6125 / NCTC 8237 / Type A).